We begin with the raw amino-acid sequence, 117 residues long: Appetite-regulating hormone (117 aa).

An N-terminal signal peptide occupies residues 1–23 (MPSPGTVCSLLLLGMLWLDLAMA). The O-decanoyl serine; alternate moiety is linked to residue serine 26. Serine 26 carries O-hexanoyl serine; alternate lipidation. A lipid anchor (O-octanoyl serine; alternate) is attached at serine 26. The disordered stretch occupies residues 29–50 (SPEHQRVQQRKESKKPPAKLQP). Residues 31–43 (EHQRVQQRKESKK) show a composition bias toward basic and acidic residues. The propeptide at 52–75 (ALAGWLRPEDGGQAEGAEDELEVR) is removed in mature form. Leucine 98 is subject to Leucine amide. The propeptide at 99 to 117 (GKFLQDILWEEAKEAPADK) is removed in mature form.

It belongs to the motilin family. O-octanoylated by GOAT/MBOAT4. O-octanoylation or O-decanoylation is essential for ghrelin activity. The O-decanoylated forms Ghrelin-27-C10 and Ghrelin-28-C10 differ in the length of the carbon backbone of the carboxylic acid bound to Ser-26. A small fraction of ghrelin, ghrelin-28-C10:1, may be modified with a singly unsaturated carboxylic acid. Also O-acetylated and O-butyrylated on Ser-26 to minor levels. In terms of processing, amidation of Leu-98 is essential for obestatin activity. In terms of tissue distribution, highest level in stomach. All forms are found in serum as well. Other tissues compensate for the loss of ghrelin synthesis in the stomach following gastrectomy.

It is found in the secreted. In terms of biological role, ghrelin is the ligand for growth hormone secretagogue receptor type 1 (GHSR). Induces the release of growth hormone from the pituitary. Has an appetite-stimulating effect, induces adiposity and stimulates gastric acid secretion. Involved in growth regulation. May be the ligand for GPR39. May have an appetite-reducing effect resulting in decreased food intake. May reduce gastric emptying activity and jejunal motility. This Homo sapiens (Human) protein is Appetite-regulating hormone (GHRL).